A 258-amino-acid polypeptide reads, in one-letter code: MLSPCLAVPATECRDPADAPAAPARHTGPARPRKRRPRNWKPHLPRERLLERGPAALTDAELIALLLGTGGGGRDVFASARALLARFGDSLRDMLDAEPDVFATHPGIGTARSAVLIAVTEIARRALVEKARERLQIDSPGAVEDYLRLRIGTRPHEVFVTLYLDARHGLIDVEESARGSLTRMAVYPREIVRRALVLNAAALIIAHNHPSGAVQPSAEDRRLTRVLHEALALIDAKLLDHVVVGTADTFSFARAGWL.

Residues 13-42 (CRDPADAPAAPARHTGPARPRKRRPRNWKP) are disordered. Positions 31 to 42 (RPRKRRPRNWKP) are enriched in basic residues. The 123-residue stretch at 136–258 (QIDSPGAVED…TFSFARAGWL (123 aa)) folds into the MPN domain. Residues histidine 207, histidine 209, and aspartate 220 each coordinate Zn(2+). The JAMM motif signature appears at 207–220 (HNHPSGAVQPSAED).

This sequence belongs to the UPF0758 family.

The sequence is that of UPF0758 protein BamMC406_2419 from Burkholderia ambifaria (strain MC40-6).